The sequence spans 1864 residues: MYMLTFEPGLCVAGIIRQVRSNPFMHVVQAYARTTETYREDIEMTKSMLKLKADEPLLVMSIVAAAMDFQTMVMAPIEMEASEFLYGFYAERMSYIVTNRGMSELHEYIQLQCQRHLLVKVEIDGQYLVQEHEYEAQGFNIKRVKELITDVATWVPKKVKGMIGWSVDAVLDSFQEYFYKVITERIPMAMKVCSWVATVWDQIKTWIEDAMTAMSSFLQGCNELLTWGLATLAACCALNVLERILIFMEFLDESIDIAGIFLRTGVVAAACYHFSSTAKGFTEMMSVLSVATTAVAAVVCANYFGGSKTKKVNAQGNPVDLLERIAAGLSSISQDSLVSLGKSCSAINSIATSYGHLRNFAGRVLTMLRDFAWKILGLETRFLADAALVFGEDVDGWLQRISALREAYVSKAYSSQDEVFEMNVLLERGYKMRHLMATGSRVSPAIGNMLMQGLADLERLHRNAAVQGVKGVRKIPFTVFAHGNSRCGKSLLIGKLISDFQEHKGLGEDTVYSRNTTETHWSGYRRQPIVVIDDFAAVESDISAEAQLINLVSSTPYSVVMAAIEEKGMTFDSQFIFASTNFLEVSPNGKIRCDDAFRNRRHVLIDVKLKPEVEYQSDDFTANQSYNILEHSHGRYNVVATFDNYEELLAYCLTKHEQHEAEQEANLAKLRRTNKFESHFKKFEQVLQLSTYFSSSIERIKREALATTDGADDYHLLYVVPRNGSYLHVAANKDFQIQQWYGPVEEVAEEDILRASERMLLGAYEFLLLSTELNVVVKNHLPELICTDNYDHNLEFCGVVGDPVYHQQLLKNIRALKPWHRAVLFGIGTLMGAKNPTPWYKRMWEGIKDVLYKAYSTEISQWPVPLKITCGIVLVGIVGAGFWKTVSVLTNAGNGAGLVGAAVNSFSVVSTAEAQSRKPNRFEVQQYRYKNVPLTRRSWGNAQMSLDQSTVSILNKCHAKFIIASQHAQIVLVPGRRFIGYSHFFCNLKHPLMVQIETADRTYFHRYQPENMEYIEDSELCVYHSSCLEDISHSCWDLFCWDPDKELPKKFSADFVSCKYNTWTKSVEPTWANVDAEVIKEDFTICDGEYRNTVSTSIRYEAPTVMSDCGSMIITNVGGKTKIVGIHVAGRDNKIGMASLLPPLLPCAQAQGAEKYFNFYPIEYDAAEGIARVGELKPKLYIPLPKKTSLVKTPEEWHLGTPCDKVPSILVKGDPRLADTVHADYDPCLSGLTKYSTPMSPLDSVLLGETCQEILDEWFDCLPEGFELGEVTINEALNGVDGVDYMDRIPLATSEGFPHVMSREQGEKGKQRFVQGDGHIVSLIPGTSVHEAYETLSRTIATEVPTLVGIECPKDEKLPFRKVFTKPKTRNFTILPMEYNILVRQYFLNFVRFIMKKRDVLPCQVGINPYSMEWSIVASRLKSQGNDILCCDYSSFDGLLSKQIMEMMADMINRFCGGGTLICAKRKNLLMACCSRLAISRDSVWRIECGIPSGFPLTVICNSIFNEILVRYHYKLLLQEHNAPNMYVQSFKNLISMVTYGDDNLISVNAVVKPYFDGTKLKQAMARNGIIITDGKDKTSATLEFRRLEDCDFLKRGFLKRSSVLWDAPEEKASLWAQLHYVNVNNCEMQVAYMTNLVNVLRELYMHDPTEMVEFRRLALKSIPWLNTTDLPTLYQVKEFYAEQRLRNIPDHNDSLDMLTSVDLLGPAILGEGVPQEALVLSELLEVRDLRYHTVPDNDNGKEVWILFNTMYPQKLLPSNCHSFTWNCGQGRGGLPTQHWLATNVTRTDSKLNKLIRTAVAANKKIVLATKDNILPINVIAVLLAARNKVMPSLATNALLTYVIGAAKKLNFLTSECQFAFFNV.

In terms of domain architecture, SF3 helicase spans 457 to 622 (LERLHRNAAV…VEYQSDDFTA (166 aa)). 483-490 (GNSRCGKS) is an ATP binding site. Residues 892–912 (AGNGAGLVGAAVNSFSVVSTA) form a helical membrane-spanning segment. Position 916 is an O-(5'-phospho-RNA)-serine (Ser916). One can recognise a Peptidase C3 domain in the interval 943–1146 (QMSLDQSTVS…MASLLPPLLP (204 aa)). Catalysis depends on for picornain 3C-like protease activity residues His983, Glu1019, and Cys1109. A RdRp catalytic domain is found at 1426-1556 (NDILCCDYSS…SVNAVVKPYF (131 aa)).

In terms of processing, specific enzymatic cleavages by picornain 3C-like protease in vivo yield mature proteins. Picornain 3C-like protease is autocatalytically processed. Post-translationally, uridylylated by the polymerase and is covalently linked to the 5'-end of genomic RNA. This uridylylated form acts as a nucleotide-peptide primer for the polymerase.

The protein localises to the host membrane. The protein resides in the host cytoplasm. It is found in the host perinuclear region. Its subcellular location is the host endoplasmic reticulum. The enzyme catalyses RNA(n) + a ribonucleoside 5'-triphosphate = RNA(n+1) + diphosphate. Functionally, thiol protease that cleaves the RNA1 and RNA2 polyproteins. Plays a role in RNA replication. It is covalently linked to the 5'terminus of both viral single-stranded RNA1 and RNA2 molecules. In terms of biological role, down-regulates the RNA1 polyprotein processing and enhances trans-cleavage of RNA2 polyproteins. The protease cofactor and the putative helicase seem to target the replication complexes to ER membranes. Their physical association causes the membrane rearrangement of host ER that may result in formation of the small membranous vesicles that are the site of viral RNA synthesis. Its function is as follows. The protease cofactor and the putative helicase seem to target the replication complexes to ER membranes. Their physical association causes the membrane rearrangement of host ER that may result in formation of the small membranous vesicles that are the site of viral RNA synthesis. Functionally, replicates the viral genome. This chain is RNA1 polyprotein, found in Trifolium pratense (Red clover).